Consider the following 458-residue polypeptide: Argininosuccinate lyase (458 aa).

Belongs to the lyase 1 family. Argininosuccinate lyase subfamily.

The protein resides in the cytoplasm. The enzyme catalyses 2-(N(omega)-L-arginino)succinate = fumarate + L-arginine. The protein operates within amino-acid biosynthesis; L-arginine biosynthesis; L-arginine from L-ornithine and carbamoyl phosphate: step 3/3. In Pseudoalteromonas atlantica (strain T6c / ATCC BAA-1087), this protein is Argininosuccinate lyase.